A 104-amino-acid chain; its full sequence is Flagellar hook-basal body complex protein FliE (104 aa).

This sequence belongs to the FliE family.

The protein resides in the bacterial flagellum basal body. In Serratia proteamaculans (strain 568), this protein is Flagellar hook-basal body complex protein FliE.